The sequence spans 329 residues: MSAFDTNPFADPVDVNPFQDPSVTQLTNAPQGGLAEFNPFSETNAATTVPVTQLPGSSQPAVLQPSVEPTQPTPQAVVSAAQAGLLRQQEELDRKAAELERKERELQNTVANLHVRQNNWPPLPSWCPVKPCFYQDFSTEIPADYQRICKMLYYLWMLHSVTLFLNLLACLAWFSGNSSKGVDFGLSILWFLIFTPCAFLCWYRPIYKAFRSDNSFSFFVFFFVFFCQIGIYIIQLVGIPGLGDSGWIAALSTLDNHSLAISVIMMVVAGFFTLCAVLSVFLLQRVHSLYRRTGASFQQAQEEFSQGIFSSRTFHRAASSAAQGAFQGN.

2 disordered regions span residues 1–21 and 51–72; these read MSAF…FQDP and VTQL…PTQP. At 1-153 the chain is on the cytoplasmic side; the sequence is MSAFDTNPFA…DYQRICKMLY (153 aa). A helical transmembrane segment spans residues 154-174; that stretch reads YLWMLHSVTLFLNLLACLAWF. At 175 to 181 the chain is on the lumenal side; sequence SGNSSKG. Residues 182-202 traverse the membrane as a helical segment; that stretch reads VDFGLSILWFLIFTPCAFLCW. Residues 203 to 218 lie on the Cytoplasmic side of the membrane; it reads YRPIYKAFRSDNSFSF. Residues 203 to 218 form an interaction with SLC9A7 region; it reads YRPIYKAFRSDNSFSF. The helical transmembrane segment at 219 to 239 threads the bilayer; it reads FVFFFVFFCQIGIYIIQLVGI. Residues 240–262 are Lumenal-facing; that stretch reads PGLGDSGWIAALSTLDNHSLAIS. A helical membrane pass occupies residues 263–283; the sequence is VIMMVVAGFFTLCAVLSVFLL. Topologically, residues 284–329 are cytoplasmic; sequence QRVHSLYRRTGASFQQAQEEFSQGIFSSRTFHRAASSAAQGAFQGN. Phosphoserine is present on residues serine 319 and serine 320.

Belongs to the SCAMP family. As to quaternary structure, interacts with SLC6A4 and SLC9A7. Interacts with SLC9A5; this interaction regulates SLC9A5 cell-surface targeting and SLC9A5 activity. Widely expressed.

It localises to the golgi apparatus. The protein localises to the trans-Golgi network membrane. Its subcellular location is the recycling endosome membrane. Functions in post-Golgi recycling pathways. Acts as a recycling carrier to the cell surface. The polypeptide is Secretory carrier-associated membrane protein 2 (SCAMP2) (Homo sapiens (Human)).